We begin with the raw amino-acid sequence, 294 residues long: Glyceraldehyde-3-phosphate dehydrogenase (294 aa).

Residues D19, R63, and T105 each coordinate NAD(+). D-glyceraldehyde 3-phosphate is bound by residues 134 to 136 and T165; that span reads SCT. C135 functions as the Nucleophile in the catalytic mechanism. Residues 169–188 are disordered; it reads KTVDGPSHKDWRGGRGASQN. Residues 194–195 and R217 each bind D-glyceraldehyde 3-phosphate; that span reads TG.

It belongs to the glyceraldehyde-3-phosphate dehydrogenase family. In terms of assembly, homotetramer.

It is found in the cytoplasm. The catalysed reaction is D-glyceraldehyde 3-phosphate + phosphate + NAD(+) = (2R)-3-phospho-glyceroyl phosphate + NADH + H(+). It functions in the pathway carbohydrate degradation; glycolysis; pyruvate from D-glyceraldehyde 3-phosphate: step 1/5. Functionally, catalyzes the oxidative phosphorylation of glyceraldehyde 3-phosphate (G3P) to 1,3-bisphosphoglycerate (BPG) using the cofactor NAD. The first reaction step involves the formation of a hemiacetal intermediate between G3P and a cysteine residue, and this hemiacetal intermediate is then oxidized to a thioester, with concomitant reduction of NAD to NADH. The reduced NADH is then exchanged with the second NAD, and the thioester is attacked by a nucleophilic inorganic phosphate to produce BPG. This Citrobacter freundii protein is Glyceraldehyde-3-phosphate dehydrogenase (gap).